Reading from the N-terminus, the 39-residue chain is Potassium channel toxin alpha-KTx 2.8 (39 aa).

3 disulfide bridges follow: C7–C29, C13–C34, and C17–C36.

Belongs to the short scorpion toxin superfamily. Potassium channel inhibitor family. Alpha-KTx 02 subfamily. Expressed by the venom gland.

Its subcellular location is the secreted. Functionally, blocks Kv1.3/KCNA3 voltage-gated potassium channels of human T-lymphocytes (Kd=0.71 nM). This is Potassium channel toxin alpha-KTx 2.8 from Centruroides elegans (Bark scorpion).